A 600-amino-acid polypeptide reads, in one-letter code: MDKKKYIRNFSIVAHIDHGKSTLADRLLEKTGTLTQREMEQQVLDTMELEKERGITIKSQAARLIYKRENGEEYILNLIDTPGHVDFTYEVSRSLAACEGAILVVDATQGIQAQTLANCYLALDNDLEIVPVINKVDLASARPDEIKQEIEDVIGIEAEDAPLVSAKTGLNIEDVLEEIVEKVPAPEGDENAPLKALIFDSYYDSYKGVVCHIRVKDGKVKPGTKIKLMSTDKVYEVVETGVFTPALMPLKEGLSAGEVGYITASIKNVRDARVGDTVTEAARPTEEALPGYKPAIPMVYSGIYPVDGAKYEELKEALEKLQINDAALSFEPETSVALGFGFRCGFLGLLHMEIIQERVEREFNLDIITTAPSVIYKVTKTNGESFDLTNPTNLPPMTEIAYMEEPVVKASIITPTDYTGAVMELCQDRRGKFIDMQYLEETRVVIHYEIPLNEIVYDFFDTLKSKTRGYASLDYELKGYEQSKLVKLDILLNGDNVDALSMIVPEVKAYQRGRAIAEKLKEIIPRHMFEVPIQAAVGSKIIARETVKAMRKDVLAKCYGGDISRKKKLLEKQKEGKKRMRQLGTVEVPQEAFMSVLKVD.

A tr-type G domain is found at 5–187 (KYIRNFSIVA…EIVEKVPAPE (183 aa)). Residues 17–22 (DHGKST) and 134–137 (NKVD) contribute to the GTP site.

The protein belongs to the TRAFAC class translation factor GTPase superfamily. Classic translation factor GTPase family. LepA subfamily.

It is found in the cell membrane. It carries out the reaction GTP + H2O = GDP + phosphate + H(+). In terms of biological role, required for accurate and efficient protein synthesis under certain stress conditions. May act as a fidelity factor of the translation reaction, by catalyzing a one-codon backward translocation of tRNAs on improperly translocated ribosomes. Back-translocation proceeds from a post-translocation (POST) complex to a pre-translocation (PRE) complex, thus giving elongation factor G a second chance to translocate the tRNAs correctly. Binds to ribosomes in a GTP-dependent manner. The protein is Elongation factor 4 of Clostridium perfringens (strain ATCC 13124 / DSM 756 / JCM 1290 / NCIMB 6125 / NCTC 8237 / Type A).